A 297-amino-acid chain; its full sequence is MEIFKLLRKDRKMLFLMFIGTVSFLFIFIPFLKFQMIGSSHKINAYPSLSAVCGLLLGPIYGFFAVMLVTLIYFFLNPKAFYFGIYSLIPPTLAVISAGALSEGKWKYSAIILIVGLLLFYLTDVGRVAFYYPYLSTLALLLILIFREKISKLLFSKDWKKMIVGATILSFSSVMTDHLYGSILGIVYLHLPAEDYISVIPLFIKERLIMTVIGAFFVIFAIEISKCFLKNATKLKEKLLKSYIDKEIKINCKNMLNVDEELLKKYNVKIPSEEEQKEILKTLVEVVVFNNDKDENR.

7 helical membrane-spanning segments follow: residues Leu14–Phe34, Leu55–Phe75, Phe81–Leu101, Ala110–Phe130, Leu135–Phe155, Ile163–Ile183, and Leu208–Phe228.

The protein resides in the cell membrane. This is an uncharacterized protein from Methanocaldococcus jannaschii (strain ATCC 43067 / DSM 2661 / JAL-1 / JCM 10045 / NBRC 100440) (Methanococcus jannaschii).